A 427-amino-acid chain; its full sequence is 3-phosphoshikimate 1-carboxyvinyltransferase (427 aa).

3-phosphoshikimate contacts are provided by Lys-20, Ser-21, and Arg-25. Phosphoenolpyruvate is bound at residue Lys-20. Gly-92 and Arg-120 together coordinate phosphoenolpyruvate. 3-phosphoshikimate is bound by residues Ser-166, Gln-168, Asp-312, and Lys-339. Gln-168 contacts phosphoenolpyruvate. Asp-312 acts as the Proton acceptor in catalysis. Residues Arg-343 and Arg-385 each contribute to the phosphoenolpyruvate site.

The protein belongs to the EPSP synthase family. In terms of assembly, monomer.

It is found in the cytoplasm. It carries out the reaction 3-phosphoshikimate + phosphoenolpyruvate = 5-O-(1-carboxyvinyl)-3-phosphoshikimate + phosphate. Its pathway is metabolic intermediate biosynthesis; chorismate biosynthesis; chorismate from D-erythrose 4-phosphate and phosphoenolpyruvate: step 6/7. In terms of biological role, catalyzes the transfer of the enolpyruvyl moiety of phosphoenolpyruvate (PEP) to the 5-hydroxyl of shikimate-3-phosphate (S3P) to produce enolpyruvyl shikimate-3-phosphate and inorganic phosphate. The chain is 3-phosphoshikimate 1-carboxyvinyltransferase from Streptococcus thermophilus (strain CNRZ 1066).